Consider the following 740-residue polypeptide: Ion-translocating oxidoreductase complex subunit C (740 aa).

4Fe-4S ferredoxin-type domains follow at residues 369–397 and 407–436; these read GEPQEEQSCIRCSACADACPADLLPQQLY and KATTHNIADCIECGACAWVCPSNIPLVQYF. [4Fe-4S] cluster-binding residues include C377, C380, C383, C387, C416, C419, C422, and C426. The segment at 602-714 is disordered; that stretch reads KLEQQQANAE…NAEPEEQIDP (113 aa). The segment covering 605–615 has biased composition (low complexity); sequence QQQANAEPEQQ.

This sequence belongs to the 4Fe4S bacterial-type ferredoxin family. RnfC subfamily. As to quaternary structure, the complex is composed of six subunits: RsxA, RsxB, RsxC, RsxD, RsxE and RsxG. [4Fe-4S] cluster serves as cofactor.

The protein resides in the cell inner membrane. Its function is as follows. Part of a membrane-bound complex that couples electron transfer with translocation of ions across the membrane. Required to maintain the reduced state of SoxR. The protein is Ion-translocating oxidoreductase complex subunit C of Escherichia coli O17:K52:H18 (strain UMN026 / ExPEC).